Reading from the N-terminus, the 231-residue chain is Lipoprotein-releasing system ATP-binding protein LolD (231 aa).

Positions 11–231 (LRLEGLTRRF…TLRDGKLVPF (221 aa)) constitute an ABC transporter domain. 47 to 54 (APSGTGKS) serves as a coordination point for ATP.

It belongs to the ABC transporter superfamily. Lipoprotein translocase (TC 3.A.1.125) family. In terms of assembly, the complex is composed of two ATP-binding proteins (LolD) and two transmembrane proteins (LolC and LolE).

The protein resides in the cell inner membrane. Its function is as follows. Part of the ABC transporter complex LolCDE involved in the translocation of mature outer membrane-directed lipoproteins, from the inner membrane to the periplasmic chaperone, LolA. Responsible for the formation of the LolA-lipoprotein complex in an ATP-dependent manner. This chain is Lipoprotein-releasing system ATP-binding protein LolD, found in Gluconobacter oxydans (strain 621H) (Gluconobacter suboxydans).